Reading from the N-terminus, the 190-residue chain is Interferon alpha-11 (190 aa).

A signal peptide spans 1–23 (MARLCAFLMILIVMSYWSTCSLG). Intrachain disulfides connect Cys24-Cys122 and Cys52-Cys162. N-linked (GlcNAc...) asparagine glycosylation occurs at Asn101.

Belongs to the alpha/beta interferon family. Post-translationally, N-glycosylated.

Its subcellular location is the secreted. Has antiviral and antiproliferative activities. Produced by macrophages and stimulates the production of two enzymes: a protein kinase and an oligoadenylate synthetase. During viral infection, mediates antiviral effect, either directly by inducing interferon-stimulated genes, either indirectly through stimulation of natural killer cells enabling them to control viral replication. This Mus musculus (Mouse) protein is Interferon alpha-11 (Ifna11).